A 301-amino-acid chain; its full sequence is GTPase Era (301 aa).

Positions 4 to 173 (KAGFVALIGK…LECISKHLSP (170 aa)) constitute an Era-type G domain. A G1 region spans residues 12–19 (GKPNAGKS). 12 to 19 (GKPNAGKS) is a GTP binding site. A G2 region spans residues 38-42 (NATRK). Residues 64–67 (DTPG) form a G3 region. GTP is bound by residues 64–68 (DTPGL) and 122–125 (SKID). Residues 122 to 125 (SKID) are G4. The G5 stretch occupies residues 152–154 (LSA). Residues 204 to 280 (LSDEIPYESD…FLNLQVIAQK (77 aa)) form the KH type-2 domain.

It belongs to the TRAFAC class TrmE-Era-EngA-EngB-Septin-like GTPase superfamily. Era GTPase family. Monomer.

The protein localises to the cytoplasm. It localises to the cell inner membrane. In terms of biological role, an essential GTPase that binds both GDP and GTP, with rapid nucleotide exchange. Plays a role in 16S rRNA processing and 30S ribosomal subunit biogenesis and possibly also in cell cycle regulation and energy metabolism. In Helicobacter pylori (strain Shi470), this protein is GTPase Era.